A 197-amino-acid chain; its full sequence is FMN-dependent NADH:quinone oxidoreductase (197 aa).

Residues serine 10, 16 to 18 (SQS), 93 to 96 (MYNF), and 137 to 140 (TRGG) contribute to the FMN site.

This sequence belongs to the azoreductase type 1 family. Homodimer. The cofactor is FMN.

It carries out the reaction 2 a quinone + NADH + H(+) = 2 a 1,4-benzosemiquinone + NAD(+). The enzyme catalyses N,N-dimethyl-1,4-phenylenediamine + anthranilate + 2 NAD(+) = 2-(4-dimethylaminophenyl)diazenylbenzoate + 2 NADH + 2 H(+). Quinone reductase that provides resistance to thiol-specific stress caused by electrophilic quinones. In terms of biological role, also exhibits azoreductase activity. Catalyzes the reductive cleavage of the azo bond in aromatic azo compounds to the corresponding amines. The chain is FMN-dependent NADH:quinone oxidoreductase from Shewanella loihica (strain ATCC BAA-1088 / PV-4).